The primary structure comprises 199 residues: Recombination protein RecR (199 aa).

A C4-type zinc finger spans residues 56–71 (CQQCNNYTEQTLCALC). The Toprim domain occupies 79–174 (TLLCVVESPA…NISQLAHGIP (96 aa)).

Belongs to the RecR family.

In terms of biological role, may play a role in DNA repair. It seems to be involved in an RecBC-independent recombinational process of DNA repair. It may act with RecF and RecO. This Legionella pneumophila subsp. pneumophila (strain Philadelphia 1 / ATCC 33152 / DSM 7513) protein is Recombination protein RecR.